The sequence spans 101 residues: MFLTGDTSPAEDNREATLPQCSLPELYACIENFNKESKKSNLLKMHGISLNEAQEVLARNLNVMSFTRGADVRGDLQPVISVNKMNKPGKHRKTPSPKINK.

This is an uncharacterized protein from Homo sapiens (Human).